The chain runs to 280 residues: Myb family transcription factor PHL11 (280 aa).

In terms of domain architecture, HTH myb-type spans 20 to 80 (RDPKPRLRWT…HLQKYRLGQQ (61 aa)). The H-T-H motif DNA-binding region spans 51-76 (PKSVLKLMGLKGLTLYHLKSHLQKYR). The disordered stretch occupies residues 77–98 (LGQQQGKKQNRTEQNKENAGSS). A coiled coil region spans residues 129–149 (AEAMRHQVDAQQRFQEQLEVQ). The short motif at 142–147 (FQEQLE) is the LHEQLE element.

It belongs to the MYB-CC family.

It localises to the nucleus. This Arabidopsis thaliana (Mouse-ear cress) protein is Myb family transcription factor PHL11.